The primary structure comprises 382 residues: Lipid-A-disaccharide synthase (382 aa).

This sequence belongs to the LpxB family.

The enzyme catalyses 2-N,3-O-bis[(3R)-3-hydroxytetradecanoyl]-alpha-D-glucosaminyl 1-phosphate + UDP-2-N,3-O-bis[(3R)-3-hydroxytetradecanoyl]-alpha-D-glucosamine = lipid A disaccharide (E. coli) + UDP + H(+). It carries out the reaction a lipid X + a UDP-2-N,3-O-bis[(3R)-3-hydroxyacyl]-alpha-D-glucosamine = a lipid A disaccharide + UDP + H(+). Its pathway is glycolipid biosynthesis; lipid IV(A) biosynthesis; lipid IV(A) from (3R)-3-hydroxytetradecanoyl-[acyl-carrier-protein] and UDP-N-acetyl-alpha-D-glucosamine: step 5/6. Functionally, condensation of UDP-2,3-diacylglucosamine and 2,3-diacylglucosamine-1-phosphate to form lipid A disaccharide, a precursor of lipid A, a phosphorylated glycolipid that anchors the lipopolysaccharide to the outer membrane of the cell. This is Lipid-A-disaccharide synthase from Serratia proteamaculans (strain 568).